A 264-amino-acid chain; its full sequence is Tropinone reductase homolog At5g06060 (264 aa).

15–39 (LVTGGTRGIGRAVVEELAKFGAKVH) lines the NADP(+) pocket. Position 148 (Ser-148) interacts with substrate. Catalysis depends on Tyr-161, which acts as the Proton acceptor.

The protein belongs to the short-chain dehydrogenases/reductases (SDR) family. SDR65C subfamily.

The sequence is that of Tropinone reductase homolog At5g06060 from Arabidopsis thaliana (Mouse-ear cress).